We begin with the raw amino-acid sequence, 1002 residues long: Golgin subfamily A member 2 (1002 aa).

The segment covering 1-11 (MWPQPRLPPRP) has biased composition (pro residues). An interaction with p115/USO1 region spans residues 1 to 84 (MWPQPRLPPR…AATLQPSDDT (84 aa)). The tract at residues 1 to 107 (MWPQPRLPPR…TSMAASQNHD (107 aa)) is disordered. A coiled-coil region spans residues 16-892 (ETRQSKLAAA…LELQELVLRL (877 aa)). Residues Arg18, Arg30, and Arg35 each carry the dimethylated arginine modification. Positions 26 to 49 (KKKLREYQQRNSPGVPTGAKKKKK) match the Nuclear localization signal motif. Position 37 is a phosphoserine (Ser37). Residues 52–63 (NGSNPETTTSGG) are compositionally biased toward polar residues. Ser66 is subject to Phosphoserine. Residues 95-105 (ASLTSMAASQN) show a composition bias toward polar residues. A phosphoserine mark is found at Ser273, Ser438, and Ser690. Residues 694-724 (HPGEGDGLDREEEEDEEEEEEEAVAVPQPMP) are disordered. Over residues 702-716 (DREEEEDEEEEEEEA) the composition is skewed to acidic residues. Phosphoserine is present on residues Ser937, Ser953, and Ser981. The segment at 992 to 1002 (DENDEVKITVI) is interaction with GORASP1/GRASP65.

The protein belongs to the GOLGA2 family. In terms of assembly, homodimer, may assemble into homohexamers. Homotetramer; forms a parallel homotetramer with a flexible rod-like structure that can give rise to I- and Y-shaped conformations. Interacts with GORASP1/GRASP65. The homooligomer forms a complex with GORASP1 with a 1:1 stoichiometry. Interacts with RAB1B that has been activated by GTP-binding. Interacts with p115/USO1; interaction with p115/USO1 inhibits interaction with STX5 and/or RAB1B. Interacts with STX5. Interacts with ZFPL1. Interacts with AKAP450/AKAP9; leading to recruit AKAP450/AKAP9 to the cis-Golgi. In terms of processing, cleaved by caspases at the onset of apoptosis. Post-translationally, methylation by PRMT5 is required for Golgi ribbon formation. While dimethylation at Arg-30 and Arg-35 are confirmed in vivo, it is unclear whether Arg-18 is methylated in vivo. Phosphorylated at Ser-37 by CDK1 at the onset of mitosis, inhibiting the interaction with p115/USO1 and triggering Golgi disassembly. Phosphorylated at Ser-37 in prophase as the Golgi complex starts to break down, and remains phosphorylated during further breakdown and partitioning of the Golgi fragments in metaphase and anaphase. In telophase, GM130 is dephosphorylated by PP2A as the Golgi fragments start to reassemble.

It localises to the golgi apparatus. The protein localises to the cis-Golgi network membrane. Its subcellular location is the endoplasmic reticulum-Golgi intermediate compartment membrane. It is found in the cytoplasm. The protein resides in the cytoskeleton. It localises to the spindle pole. Peripheral membrane component of the cis-Golgi stack that acts as a membrane skeleton that maintains the structure of the Golgi apparatus, and as a vesicle thether that facilitates vesicle fusion to the Golgi membrane. Required for normal protein transport from the endoplasmic reticulum to the Golgi apparatus and the cell membrane. Together with p115/USO1 and STX5, involved in vesicle tethering and fusion at the cis-Golgi membrane to maintain the stacked and inter-connected structure of the Golgi apparatus. Plays a central role in mitotic Golgi disassembly: phosphorylation at Ser-37 by CDK1 at the onset of mitosis inhibits the interaction with p115/USO1, preventing tethering of COPI vesicles and thereby inhibiting transport through the Golgi apparatus during mitosis. Also plays a key role in spindle pole assembly and centrosome organization. Promotes the mitotic spindle pole assembly by activating the spindle assembly factor TPX2 to nucleate microtubules around the Golgi and capture them to couple mitotic membranes to the spindle: upon phosphorylation at the onset of mitosis, GOLGA2 interacts with importin-alpha via the nuclear localization signal region, leading to recruit importin-alpha to the Golgi membranes and liberate the spindle assembly factor TPX2 from importin-alpha. TPX2 then activates AURKA kinase and stimulates local microtubule nucleation. Upon filament assembly, nascent microtubules are further captured by GOLGA2, thus linking Golgi membranes to the spindle. Regulates the meiotic spindle pole assembly, probably via the same mechanism. Also regulates the centrosome organization. Also required for the Golgi ribbon formation and glycosylation of membrane and secretory proteins. The polypeptide is Golgin subfamily A member 2 (GOLGA2) (Homo sapiens (Human)).